The following is a 527-amino-acid chain: Peptide chain release factor 3 (527 aa).

The tr-type G domain maps to 9–277 (AKRRTFAIIS…AVVDWAPLPL (269 aa)). GTP-binding positions include 18–25 (SHPDAGKT), 86–90 (DTPGH), and 140–143 (NKLD).

This sequence belongs to the TRAFAC class translation factor GTPase superfamily. Classic translation factor GTPase family. PrfC subfamily.

It localises to the cytoplasm. Increases the formation of ribosomal termination complexes and stimulates activities of RF-1 and RF-2. It binds guanine nucleotides and has strong preference for UGA stop codons. It may interact directly with the ribosome. The stimulation of RF-1 and RF-2 is significantly reduced by GTP and GDP, but not by GMP. This chain is Peptide chain release factor 3, found in Pseudomonas fluorescens (strain ATCC BAA-477 / NRRL B-23932 / Pf-5).